Reading from the N-terminus, the 347-residue chain is Phosphoribosylformylglycinamidine cyclo-ligase (347 aa).

This sequence belongs to the AIR synthase family.

It localises to the cytoplasm. The catalysed reaction is 2-formamido-N(1)-(5-O-phospho-beta-D-ribosyl)acetamidine + ATP = 5-amino-1-(5-phospho-beta-D-ribosyl)imidazole + ADP + phosphate + H(+). It participates in purine metabolism; IMP biosynthesis via de novo pathway; 5-amino-1-(5-phospho-D-ribosyl)imidazole from N(2)-formyl-N(1)-(5-phospho-D-ribosyl)glycinamide: step 2/2. The sequence is that of Phosphoribosylformylglycinamidine cyclo-ligase from Alcanivorax borkumensis (strain ATCC 700651 / DSM 11573 / NCIMB 13689 / SK2).